Here is a 390-residue protein sequence, read N- to C-terminus: Chorismate synthase 1 (390 aa).

2 residues coordinate NADP(+): Arg39 and Arg45. FMN is bound by residues 132–134 (RSS), 253–254 (NA), Gly298, 313–317 (KPIPT), and Arg339.

Belongs to the chorismate synthase family. As to quaternary structure, homotetramer. Requires FMNH2 as cofactor.

The enzyme catalyses 5-O-(1-carboxyvinyl)-3-phosphoshikimate = chorismate + phosphate. The protein operates within metabolic intermediate biosynthesis; chorismate biosynthesis; chorismate from D-erythrose 4-phosphate and phosphoenolpyruvate: step 7/7. Its function is as follows. Catalyzes the anti-1,4-elimination of the C-3 phosphate and the C-6 proR hydrogen from 5-enolpyruvylshikimate-3-phosphate (EPSP) to yield chorismate, which is the branch point compound that serves as the starting substrate for the three terminal pathways of aromatic amino acid biosynthesis. This reaction introduces a second double bond into the aromatic ring system. The polypeptide is Chorismate synthase 1 (Bacillus anthracis).